The following is a 96-amino-acid chain: Putative membrane protein insertion efficiency factor (96 aa).

Over residues 71-84 (THGTAAAPPASAAP) the composition is skewed to low complexity. The disordered stretch occupies residues 71–96 (THGTAAAPPASAAPGRPPVTVRLPRP).

This sequence belongs to the UPF0161 family.

The protein resides in the cell inner membrane. In terms of biological role, could be involved in insertion of integral membrane proteins into the membrane. In Cupriavidus metallidurans (strain ATCC 43123 / DSM 2839 / NBRC 102507 / CH34) (Ralstonia metallidurans), this protein is Putative membrane protein insertion efficiency factor.